We begin with the raw amino-acid sequence, 210 residues long: Large ribosomal subunit protein uL3 (210 aa).

The protein belongs to the universal ribosomal protein uL3 family. As to quaternary structure, part of the 50S ribosomal subunit. Forms a cluster with proteins L14 and L19.

Its function is as follows. One of the primary rRNA binding proteins, it binds directly near the 3'-end of the 23S rRNA, where it nucleates assembly of the 50S subunit. The chain is Large ribosomal subunit protein uL3 from Geobacter metallireducens (strain ATCC 53774 / DSM 7210 / GS-15).